The primary structure comprises 446 residues: DDB1- and CUL4-associated factor 12 (446 aa).

The segment covering 1–12 has biased composition (basic residues); sequence MTRRAVSRKRRA. Positions 1–33 are disordered; the sequence is MTRRAVSRKRRAAPGTGPGEQSDWDHSAHKRKR. WD repeat units follow at residues 132–173, 177–215, 245–284, and 333–370; these read SHQS…PVCV, GHNDWIFSIAWISDTMAVSGSRDGSMALWEMTEEILSKS, PVNCKVRALAFNSKNKELGAVSLDGFFHLWKAELTLAKLL, and EQGSGIRSVSFYEHIVTVGTGQGALLFYDIRAQRFLED.

Belongs to the WD repeat DCAF12 family. As to quaternary structure, component of the DCX(DCAF12) E3 ubiquitin ligase complex, at least composed of cul4 (cul4a or cul4b), ddb1, dcaf12 and rbx1.

It localises to the cytoplasm. It is found in the cytoskeleton. Its subcellular location is the microtubule organizing center. The protein resides in the centrosome. The protein localises to the nucleus. The protein operates within protein modification; protein ubiquitination. In terms of biological role, substrate-recognition component of a DCX (DDB1-CUL4-X-box) E3 ubiquitin-protein ligase complex of the DesCEND (destruction via C-end degrons) pathway, which recognizes a C-degron located at the extreme C terminus of target proteins, leading to their ubiquitination and degradation. The C-degron recognized by the DesCEND pathway is usually a motif of less than ten residues and can be present in full-length proteins, truncated proteins or proteolytically cleaved forms. The DCX(DCAF12) complex specifically recognizes proteins with a diglutamate (Glu-Glu) at the C-terminus leading to their ubiquitination and degradation. Also directly recognizes the C-terminal glutamate-leucine (Glu-Leu) degron as an alternative degron in proteins leading to their ubiquitination and degradation. The sequence is that of DDB1- and CUL4-associated factor 12 from Xenopus tropicalis (Western clawed frog).